A 462-amino-acid chain; its full sequence is Transcription factor-like protein EUC1 (462 aa).

Disordered regions lie at residues 11–43 (GFGG…TTSP) and 66–97 (RPTD…GRIK). Serine 17 and serine 23 each carry phosphoserine. Over residues 26 to 35 (DSERRNHDLG) the composition is skewed to basic and acidic residues. Positions 81-140 (SASATEPTNRIGPGRIKETPETNFNAFLIAQLTRMEEQNANLKEEISLMKKEQELFFLEN) are homodimerization region. Residues 105-135 (NAFLIAQLTRMEEQNANLKEEISLMKKEQEL) are a coiled coil. 2 disordered regions span residues 190–214 (QEAA…STNW) and 226–289 (GDPR…RNRR). The segment covering 197 to 214 (NPSTSTQAHQSQSRSTNW) has biased composition (polar residues). A Glycyl lysine isopeptide (Lys-Gly) (interchain with G-Cter in SUMO) cross-link involves residue lysine 231. A phosphoserine mark is found at serine 237 and serine 249. A compositionally biased stretch (acidic residues) spans 240–251 (ENGEYDGNESDE). Over residues 252 to 282 (NATTRNLPLNNPDSVSNADDSNNQLDGTGNE) the composition is skewed to polar residues. Threonine 254 bears the Phosphothreonine mark. The interval 296–385 (YKLNRAIQNV…QAIKVVENIR (90 aa)) is GCR1 DNA-binding region. The span at 441-455 (SLQQPHSIPNSSTGT) shows a compositional bias: polar residues. Residues 441 to 462 (SLQQPHSIPNSSTGTPEHDQDT) form a disordered region.

In terms of assembly, homodimer. Interacts with SLX5. In terms of processing, sumoylated at Lys-231 and subsequently ubiquitinated by the SUMO-targeted ubiquitin ligase (STUbL) complex SLX5/SLX8.

The protein resides in the chromosome. Transcription factor-like protein that binds to specific DNA motifs called ub-HS-motif associated with several locations where proteins other than histone H2B are ubiquitinated (ub-hotspots). Ubiquitination at these sites depends on the SUMO-targeted ubiquitin ligase (STUbL) complex SLX5/SLX8 and protein turnover on the CDC48 segregase. UBC9, SIZ1, or SIZ2 sumoylate DNA-bound EUC1 to stabilize its DNA-binding. Sumoylated EUC1 acts a cofactor required for the recruitment of the SLX5/SLX8 STUbL complex via specific contacts between EUC1 and SLX5, as well as an additional SUMO-mediated interaction. SLX5/SLX8 then ubiquitinates EUC1 and presumably other targets at ub-hotspots, and the CDC48/UFD1/NPL4 complex, together with UBX4 and UBX5, removes Lys-48-linked ubiquitinated proteins from chromatin. Ubiquitinated proteins could be either degraded by the proteasome or recycled by deubiquitination. EUC1 itself does not seem to underlie extensive turnover, as it is a very stable protein. EUC1 is able to act as a transcription factor, but its function at ub-hotspots does not seem to depend on this ability. EUC1-mediated ub-hotspots are crucial during stress responses when gene expression control is impaired. In Saccharomyces cerevisiae (strain ATCC 204508 / S288c) (Baker's yeast), this protein is Transcription factor-like protein EUC1.